A 298-amino-acid polypeptide reads, in one-letter code: ATP phosphoribosyltransferase (298 aa).

Belongs to the ATP phosphoribosyltransferase family. Long subfamily. Mg(2+) is required as a cofactor.

The protein resides in the cytoplasm. It catalyses the reaction 1-(5-phospho-beta-D-ribosyl)-ATP + diphosphate = 5-phospho-alpha-D-ribose 1-diphosphate + ATP. It participates in amino-acid biosynthesis; L-histidine biosynthesis; L-histidine from 5-phospho-alpha-D-ribose 1-diphosphate: step 1/9. Feedback inhibited by histidine. Its function is as follows. Catalyzes the condensation of ATP and 5-phosphoribose 1-diphosphate to form N'-(5'-phosphoribosyl)-ATP (PR-ATP). Has a crucial role in the pathway because the rate of histidine biosynthesis seems to be controlled primarily by regulation of HisG enzymatic activity. In Aliivibrio fischeri (strain MJ11) (Vibrio fischeri), this protein is ATP phosphoribosyltransferase.